The primary structure comprises 333 residues: Ribosomal RNA small subunit methyltransferase H (333 aa).

Residues 43 to 45 (GGH), Asp62, Tyr89, Asp110, and Gln117 each bind S-adenosyl-L-methionine. Positions 312–333 (RLRAARRIRTTPTRPSPRRRRP) are disordered.

Belongs to the methyltransferase superfamily. RsmH family.

The protein localises to the cytoplasm. The enzyme catalyses cytidine(1402) in 16S rRNA + S-adenosyl-L-methionine = N(4)-methylcytidine(1402) in 16S rRNA + S-adenosyl-L-homocysteine + H(+). In terms of biological role, specifically methylates the N4 position of cytidine in position 1402 (C1402) of 16S rRNA. The protein is Ribosomal RNA small subunit methyltransferase H of Beutenbergia cavernae (strain ATCC BAA-8 / DSM 12333 / CCUG 43141 / JCM 11478 / NBRC 16432 / NCIMB 13614 / HKI 0122).